Here is a 345-residue protein sequence, read N- to C-terminus: tRNA N6-adenosine threonylcarbamoyltransferase (345 aa).

Residues H117 and H121 each coordinate Fe cation. Substrate contacts are provided by residues 140–144 (LVSGG), D173, G186, and N279. Position 307 (D307) interacts with Fe cation.

It belongs to the KAE1 / TsaD family. Fe(2+) is required as a cofactor.

The protein localises to the cytoplasm. It catalyses the reaction L-threonylcarbamoyladenylate + adenosine(37) in tRNA = N(6)-L-threonylcarbamoyladenosine(37) in tRNA + AMP + H(+). Functionally, required for the formation of a threonylcarbamoyl group on adenosine at position 37 (t(6)A37) in tRNAs that read codons beginning with adenine. Is involved in the transfer of the threonylcarbamoyl moiety of threonylcarbamoyl-AMP (TC-AMP) to the N6 group of A37, together with TsaE and TsaB. TsaD likely plays a direct catalytic role in this reaction. This Verminephrobacter eiseniae (strain EF01-2) protein is tRNA N6-adenosine threonylcarbamoyltransferase.